Consider the following 257-residue polypeptide: Protein THYLAKOID ASSEMBLY 8-like, chloroplastic (257 aa).

The N-terminal 55 residues, Met1–Ser55, are a transit peptide targeting the chloroplast. 2 PPR repeats span residues Asp142–Pro176 and Asp177–Pro211.

The protein belongs to the PPR family. P subfamily.

The protein resides in the plastid. It is found in the chloroplast. Functionally, binds weakly to specific single strand RNA (ssRNA). The sequence is that of Protein THYLAKOID ASSEMBLY 8-like, chloroplastic from Arabidopsis thaliana (Mouse-ear cress).